The chain runs to 357 residues: Protein pelota homolog (357 aa).

This sequence belongs to the eukaryotic release factor 1 family. Pelota subfamily. In terms of assembly, monomer. A divalent metal cation is required as a cofactor.

The protein localises to the cytoplasm. Its function is as follows. May function in recognizing stalled ribosomes, interact with stem-loop structures in stalled mRNA molecules, and effect endonucleolytic cleavage of the mRNA. May play a role in the release non-functional ribosomes and degradation of damaged mRNAs. Has endoribonuclease activity. The polypeptide is Protein pelota homolog (Thermococcus onnurineus (strain NA1)).